Reading from the N-terminus, the 197-residue chain is NAD(P)H-quinone oxidoreductase subunit 6, chloroplastic (197 aa).

A run of 5 helical transmembrane segments spans residues 10–30 (FVLALVELGILLGSLGAVLLV), 39–59 (LGLVFTCISLLYFVLNADFVA), 60–80 (AAQLLVYVGAINVLTVFAVMI), 94–114 (IGYIITAGTCTILFSILSFVI), and 147–167 (LLGEFVIPFELLSILLLAALV).

It belongs to the complex I subunit 6 family. NDH is composed of at least 16 different subunits, 5 of which are encoded in the nucleus.

The protein localises to the plastid. Its subcellular location is the chloroplast thylakoid membrane. The enzyme catalyses a plastoquinone + NADH + (n+1) H(+)(in) = a plastoquinol + NAD(+) + n H(+)(out). It carries out the reaction a plastoquinone + NADPH + (n+1) H(+)(in) = a plastoquinol + NADP(+) + n H(+)(out). Its function is as follows. NDH shuttles electrons from NAD(P)H:plastoquinone, via FMN and iron-sulfur (Fe-S) centers, to quinones in the photosynthetic chain and possibly in a chloroplast respiratory chain. The immediate electron acceptor for the enzyme in this species is believed to be plastoquinone. Couples the redox reaction to proton translocation, and thus conserves the redox energy in a proton gradient. This Adiantum capillus-veneris (Maidenhair fern) protein is NAD(P)H-quinone oxidoreductase subunit 6, chloroplastic (ndhG).